A 270-amino-acid chain; its full sequence is Protein-ADP-ribose hydrolase (270 aa).

A Macro domain is found at 73–267 (VSVKDCQKTN…LYDTYLQKEN (195 aa)). Aspartate 92, isoleucine 93, and asparagine 106 together coordinate ADP-D-ribose. Positions 112, 117, and 119 each coordinate Zn(2+). ADP-D-ribose is bound by residues cysteine 119, isoleucine 120, aspartate 121, serine 212, threonine 213, glycine 214, glutamate 215, and phenylalanine 216.

Belongs to the MacroD-type family. Zn-Macro subfamily. In terms of assembly, monomer. Interacts with the lipoylated form of GcvH-L. Requires Zn(2+) as cofactor.

It catalyses the reaction 4-O-(ADP-D-ribosyl)-L-aspartyl-[protein] + H2O = L-aspartyl-[protein] + ADP-D-ribose + H(+). It carries out the reaction 5-O-(ADP-D-ribosyl)-L-glutamyl-[protein] + H2O = L-glutamyl-[protein] + ADP-D-ribose + H(+). The enzyme catalyses S-(ADP-D-ribosyl)-L-cysteinyl-[protein] + H2O = ADP-D-ribose + L-cysteinyl-[protein]. ADP-ribosylhydrolase that specifically reverses the SirTM-mediated mono-ADP-ribosylation at an asparatate residue of GcvH-L (SpyM50867), by releasing ADP-ribose from the target protein. May play a role in the regulation of the response to host-induced oxidative stress. It can also hydrolyze ADP-ribosyl-glutamate bonds and ADP-ribosyl-cysteine bonds. In vitro, it can remove the ADP-ribosyl modification from the human mono-ADP-ribosylated PARP1 E988Q mutant, which is primarily modified on glutamate site with only minor aspartate contribution. It can also hydrolyze the ADP-ribosyl-cysteinyl glycosidic bond of a Cys-ADP-ribosylated synthetic peptide. This Streptococcus pyogenes serotype M5 (strain Manfredo) protein is Protein-ADP-ribose hydrolase.